We begin with the raw amino-acid sequence, 120 residues long: Large ribosomal subunit protein uL18 (120 aa).

The protein belongs to the universal ribosomal protein uL18 family. Part of the 50S ribosomal subunit; part of the 5S rRNA/L5/L18/L25 subcomplex. Contacts the 5S and 23S rRNAs.

In terms of biological role, this is one of the proteins that bind and probably mediate the attachment of the 5S RNA into the large ribosomal subunit, where it forms part of the central protuberance. This chain is Large ribosomal subunit protein uL18, found in Rhizobium meliloti (strain 1021) (Ensifer meliloti).